A 1384-amino-acid chain; its full sequence is CHD3-type chromatin-remodeling factor PICKLE (1384 aa).

Phosphoserine is present on Ser23. The PHD-type zinc finger occupies 49-96; the sequence is ENACQACGESTNLVSCNTCTYAFHAKCLVPPLKDASVENWRCPECVSP. Chromo domains are found at residues 98-180 and 190-249; these read NEID…NSED and TTVD…RSKD. One can recognise a Helicase ATP-binding domain in the interval 285 to 471; that stretch reads RFSWSKQTHV…FMLMHFLDAG (187 aa). 298 to 305 serves as a coordination point for ATP; it reads DEMGLGKT. The Nuclear localization signal signature appears at 376–383; it reads KKKKSGQI. A DEAH box motif is present at residues 422 to 425; that stretch reads DEGH. Residues 599 to 760 enclose the Helicase C-terminal domain; the sequence is LLDKMMVKLK…NINQEELDDI (162 aa). Positions 893–912 are enriched in acidic residues; sequence AGLEDVSSDGDESYEAESTD. 4 disordered regions span residues 893 to 941, 1122 to 1152, 1313 to 1344, and 1365 to 1384; these read AGLE…TPLM, GLQG…NNNA, SDQS…PLRG, and VDVK…MVVD. A compositionally biased stretch (polar residues) spans 1138-1152; sequence TNQNPGSVITGNNNA. 2 stretches are compositionally biased toward basic and acidic residues: residues 1316–1341 and 1367–1384; these read SKSH…ETKP and VKME…MVVD.

This sequence belongs to the SNF2/RAD54 helicase family. As to quaternary structure, interacts with TAF12B. Mostly expressed in tissue undergoing significant differentiation (meristems and primordia) such as young seedlings, influorescent tissue and young siliques, but not in endosperm and seed coat (at protein level). Levels decrease as organs age. Also present in trichomes.

The protein resides in the nucleus. Its function is as follows. Chromatin remodeling factor that represses the expression of embryonic trait genes (such as NFYB9/LEC1) upon and after seed germination and thus enables the developmental switch to post-germinative growth. Silences some MADS-box proteins such as PHE1 and PHE2. Plays a role during carpel differentiation. Regulates late processes in cytokinin signaling. The chain is CHD3-type chromatin-remodeling factor PICKLE (PKL) from Arabidopsis thaliana (Mouse-ear cress).